We begin with the raw amino-acid sequence, 256 residues long: Phosphonates import ATP-binding protein PhnC (256 aa).

The 245-residue stretch at 2 to 246 (LKVIQLDKTY…VLQHIYRQPD (245 aa)) folds into the ABC transporter domain. Residue 35–42 (GPSGAGKT) participates in ATP binding.

It belongs to the ABC transporter superfamily. Phosphonates importer (TC 3.A.1.9.1) family. As to quaternary structure, the complex is composed of two ATP-binding proteins (PhnC), two transmembrane proteins (PhnE) and a solute-binding protein (PhnD).

It is found in the cell membrane. It catalyses the reaction phosphonate(out) + ATP + H2O = phosphonate(in) + ADP + phosphate + H(+). Part of the ABC transporter complex PhnCDE involved in phosphonates import. Responsible for energy coupling to the transport system. In Lactiplantibacillus plantarum (strain ATCC BAA-793 / NCIMB 8826 / WCFS1) (Lactobacillus plantarum), this protein is Phosphonates import ATP-binding protein PhnC.